Reading from the N-terminus, the 343-residue chain is Nod factor export ATP-binding protein I (343 aa).

Residues methionine 1–serine 14 are compositionally biased toward polar residues. A disordered region spans residues methionine 1 to arginine 38. The ABC transporter domain maps to isoleucine 45–tyrosine 275. Glycine 77 to serine 84 contacts ATP.

Belongs to the ABC transporter superfamily. Lipooligosaccharide exporter (TC 3.A.1.102) family. In terms of assembly, the complex is composed of two ATP-binding proteins (NodI) and two transmembrane proteins (NodJ).

The protein resides in the cell inner membrane. Its function is as follows. Part of the ABC transporter complex NodIJ involved in the export of the nodulation factors (Nod factors), the bacterial signal molecules that induce symbiosis and subsequent nodulation induction. Nod factors are LCO (lipo-chitin oligosaccharide), a modified beta-1,4-linked N-acetylglucosamine oligosaccharide. This subunit is responsible for energy coupling to the transport system. The chain is Nod factor export ATP-binding protein I from Sinorhizobium fredii (strain NBRC 101917 / NGR234).